We begin with the raw amino-acid sequence, 817 residues long: tRNA(Met) cytidine acetyltransferase TmcA (817 aa).

ATP-binding positions include Gln-265, 289–298 (GRGKSVSVGI), and Arg-439. Residues 469–664 (ELIRKMEVYL…YTAIVIKPIS (196 aa)) enclose the N-acetyltransferase domain. Residues 589 to 591 (IAT), 596 to 602 (MDLGLGS), Glu-629, and Arg-636 each bind acetyl-CoA.

This sequence belongs to the RNA cytidine acetyltransferase family. TmcA subfamily.

The protein resides in the cytoplasm. The catalysed reaction is cytidine(34) in elongator tRNA(Met) + acetyl-CoA + ATP + H2O = N(4)-acetylcytidine(34) in elongator tRNA(Met) + ADP + phosphate + CoA + H(+). It carries out the reaction a cytidine in RNA + acetyl-CoA + ATP + H2O = an N(4)-acetylcytidine in RNA + ADP + phosphate + CoA + H(+). The enzyme catalyses a cytidine in tRNA + acetyl-CoA + ATP + H2O = an N(4)-acetylcytidine in tRNA + ADP + phosphate + CoA + H(+). It catalyses the reaction a cytidine in mRNA + acetyl-CoA + ATP + H2O = an N(4)-acetylcytidine in mRNA + ADP + phosphate + CoA + H(+). In terms of biological role, catalyzes the formation of N(4)-acetylcytidine (ac(4)C) at the wobble position of tRNA(Met), by using acetyl-CoA as an acetyl donor and ATP (or GTP). Its function is as follows. Catalyzes the formation of N(4)-acetylcytidine (ac(4)C) sites in rRNA, tRNA, mRNA and non-coding (nc) RNA, almost always on the middle C of a CCG motif. In hyperthermophiles more acetylation is seen at higher temperatures. The chain is tRNA(Met) cytidine acetyltransferase TmcA from Pyrococcus abyssi (strain GE5 / Orsay).